A 552-amino-acid polypeptide reads, in one-letter code: Methyl-coenzyme M reductase II subunit alpha (552 aa).

Q150 lines the coenzyme F430 pocket. Residues R228, 259–260 (KH), and R273 contribute to the coenzyme B site. Residues Y335 and Y446 each contribute to the coenzyme M site.

The protein belongs to the methyl-coenzyme M reductase alpha subunit family. MCR is a hexamer of two alpha, two beta, and two gamma chains, forming a dimer of heterotrimers. The cofactor is coenzyme F430.

The catalysed reaction is coenzyme B + methyl-coenzyme M = methane + coenzyme M-coenzyme B heterodisulfide. It participates in one-carbon metabolism; methyl-coenzyme M reduction; methane from methyl-coenzyme M: step 1/1. In terms of biological role, component of the methyl-coenzyme M reductase (MCR) I that catalyzes the reductive cleavage of methyl-coenzyme M (CoM-S-CH3 or 2-(methylthio)ethanesulfonate) using coenzyme B (CoB or 7-mercaptoheptanoylthreonine phosphate) as reductant which results in the production of methane and the mixed heterodisulfide of CoB and CoM (CoM-S-S-CoB). This is the final step in methanogenesis. The protein is Methyl-coenzyme M reductase II subunit alpha (mrtA) of Methanocaldococcus jannaschii (strain ATCC 43067 / DSM 2661 / JAL-1 / JCM 10045 / NBRC 100440) (Methanococcus jannaschii).